Here is a 509-residue protein sequence, read N- to C-terminus: ATP synthase subunit alpha (509 aa).

Residue G169–T176 coordinates ATP.

The protein belongs to the ATPase alpha/beta chains family. As to quaternary structure, F-type ATPases have 2 components, CF(1) - the catalytic core - and CF(0) - the membrane proton channel. CF(1) has five subunits: alpha(3), beta(3), gamma(1), delta(1), epsilon(1). CF(0) has three main subunits: a(1), b(2) and c(9-12). The alpha and beta chains form an alternating ring which encloses part of the gamma chain. CF(1) is attached to CF(0) by a central stalk formed by the gamma and epsilon chains, while a peripheral stalk is formed by the delta and b chains.

The protein resides in the cell inner membrane. It catalyses the reaction ATP + H2O + 4 H(+)(in) = ADP + phosphate + 5 H(+)(out). Functionally, produces ATP from ADP in the presence of a proton gradient across the membrane. The alpha chain is a regulatory subunit. The polypeptide is ATP synthase subunit alpha (Brucella ovis (strain ATCC 25840 / 63/290 / NCTC 10512)).